The chain runs to 120 residues: Large ribosomal subunit protein uL18 (120 aa).

Positions 1 to 26 (MKLTRRESKQRRHRRVRGKVQGSPER) are disordered. Basic residues predominate over residues 8–18 (SKQRRHRRVRG).

This sequence belongs to the universal ribosomal protein uL18 family. In terms of assembly, part of the 50S ribosomal subunit; part of the 5S rRNA/L5/L18/L25 subcomplex. Contacts the 5S and 23S rRNAs.

This is one of the proteins that bind and probably mediate the attachment of the 5S RNA into the large ribosomal subunit, where it forms part of the central protuberance. The polypeptide is Large ribosomal subunit protein uL18 (Trichormus variabilis (strain ATCC 29413 / PCC 7937) (Anabaena variabilis)).